The chain runs to 325 residues: MKEKIYEYKDDHNWFISQWSKVGSSTYYEEEAEETYSSIEQSLRGLLDEGNSFILTVIKINSNIALVRFILKMLNEEQQDNFKVSSHKGAILVTQGQQLLLVCLPKKGITITDFFEKEKKVSELGDTILIATRNEGKTKEFSQMFAQLGIKVENLNQYPDLPEVEETGLTFEENARLKAETISHLTGQMVLADDSGLKVDVLGGLPGIWSARFSGLDATDQSNNAKLLHELAMVFDIKDRSAQFHTTLVVAAPDKESLVVEADWSGYIDFAPKGNNGFGYDPLFLVGETGKTAAELSNHEKNIISHRGQAVKKLMEVFPAWQNAH.

Residues 1 to 128 form a unknown region; the sequence is MKEKIYEYKD…KKVSELGDTI (128 aa). Residues 129–324 are NTP pyrophosphatase; the sequence is LIATRNEGKT…MEVFPAWQNA (196 aa). 132–137 is a binding site for substrate; it reads TRNEGK. Residues glutamate 165 and aspartate 194 each contribute to the Mg(2+) site. The Proton acceptor role is filled by aspartate 194. Substrate contacts are provided by residues serine 195, 278 to 281, lysine 301, and 306 to 307; these read FGYD and HR.

This sequence belongs to the HAM1 NTPase family. Homodimer. Requires Mg(2+) as cofactor.

It carries out the reaction XTP + H2O = XMP + diphosphate + H(+). It catalyses the reaction dITP + H2O = dIMP + diphosphate + H(+). The catalysed reaction is ITP + H2O = IMP + diphosphate + H(+). Its function is as follows. Pyrophosphatase that catalyzes the hydrolysis of nucleoside triphosphates to their monophosphate derivatives, with a high preference for the non-canonical purine nucleotides XTP (xanthosine triphosphate), dITP (deoxyinosine triphosphate) and ITP. Seems to function as a house-cleaning enzyme that removes non-canonical purine nucleotides from the nucleotide pool, thus preventing their incorporation into DNA/RNA and avoiding chromosomal lesions. This is dITP/XTP pyrophosphatase from Streptococcus mutans serotype c (strain ATCC 700610 / UA159).